The primary structure comprises 590 residues: 2-isopropylmalate synthase (590 aa).

One can recognise a Pyruvate carboxyltransferase domain in the interval 40 to 314 (PRWCAVDLRD…DPQIDFSDID (275 aa)). Mg(2+)-binding residues include aspartate 49, histidine 253, histidine 255, and asparagine 289. Positions 456–590 (APETESDAKW…SSVPAELAGV (135 aa)) are regulatory domain.

Belongs to the alpha-IPM synthase/homocitrate synthase family. LeuA type 2 subfamily. In terms of assembly, homodimer. Requires Mg(2+) as cofactor.

Its subcellular location is the cytoplasm. It carries out the reaction 3-methyl-2-oxobutanoate + acetyl-CoA + H2O = (2S)-2-isopropylmalate + CoA + H(+). The protein operates within amino-acid biosynthesis; L-leucine biosynthesis; L-leucine from 3-methyl-2-oxobutanoate: step 1/4. Its function is as follows. Catalyzes the condensation of the acetyl group of acetyl-CoA with 3-methyl-2-oxobutanoate (2-ketoisovalerate) to form 3-carboxy-3-hydroxy-4-methylpentanoate (2-isopropylmalate). This is 2-isopropylmalate synthase from Leifsonia xyli subsp. xyli (strain CTCB07).